The following is a 107-amino-acid chain: Inner membrane protein YgbE (107 aa).

Topologically, residues 1–20 are cytoplasmic; sequence MRNSHNITLTNNDSLTEDEE. Residues 21-43 form a helical membrane-spanning segment; that stretch reads TTWSLPGAVVGFISWLFALAMPM. The Periplasmic segment spans residues 44–52; sequence LIYGSNTLF. Residues 53–75 traverse the membrane as a helical segment; that stretch reads FFIYTWPFFLALMPVAVVVGIAL. At 76–86 the chain is on the cytoplasmic side; it reads HSLMDGKLRYS. Residues 87 to 106 form a helical membrane-spanning segment; the sequence is IVFTLVTVGIMFGALFMWLL. Gly107 is a topological domain (periplasmic).

Its subcellular location is the cell inner membrane. This Escherichia coli (strain K12) protein is Inner membrane protein YgbE (ygbE).